A 336-amino-acid chain; its full sequence is Carbamoyl dehydratase HypE (336 aa).

An S-carbamoylcysteine; by HypF; alternate modification is found at Cys336. The residue at position 336 (Cys336) is an S-cyanocysteine; by autocatalysis; alternate.

The protein belongs to the HypE family. Homodimer. Forms a complex with HypF. Also forms a complex with HypC, or HybG, and HypD. Modified by HypF, which adds a carboxamido group to the thiolate of the C-terminal cysteine, yielding a protein-S-carboxamide. The carboxamido group is then dehydrated by HypE itself to yield a protein-thiocyanate.

It carries out the reaction C-terminal S-carboxamide-L-cysteinyl-[HypE protein] + ATP = C-terminal S-cyanate-L-cysteinyl-[HypE protein] + ADP + phosphate + H(+). It participates in protein modification; [NiFe] hydrogenase maturation. Functionally, involved in the maturation of [NiFe] hydrogenases. Along with HypF, it catalyzes the synthesis of the CN ligands of the active site iron of [NiFe]-hydrogenases. HypE catalyzes the ATP-dependent dehydration of the carboxamido group attached to its C-terminal cysteine to a cyano group. The cyano group is then transferred from HypE to the HypC-HypD complex or the HybG-HypD complex. The sequence is that of Carbamoyl dehydratase HypE from Escherichia coli (strain K12).